The following is a 220-amino-acid chain: Adenylate kinase (220 aa).

G10 to T15 provides a ligand contact to ATP. Residues A30–I59 form an NMP region. AMP-binding positions include R36, D57–I59, G83–R86, and Q90. An LID region spans residues G124–D161. R125 provides a ligand contact to ATP. The Zn(2+) site is built by C128 and C131. V134–Y135 contacts ATP. The Zn(2+) site is built by C148 and C151. R158 and R169 together coordinate AMP. G197 provides a ligand contact to ATP.

Belongs to the adenylate kinase family. Monomer.

The protein localises to the cytoplasm. The enzyme catalyses AMP + ATP = 2 ADP. The protein operates within purine metabolism; AMP biosynthesis via salvage pathway; AMP from ADP: step 1/1. Its function is as follows. Catalyzes the reversible transfer of the terminal phosphate group between ATP and AMP. Plays an important role in cellular energy homeostasis and in adenine nucleotide metabolism. This chain is Adenylate kinase, found in Pyrococcus abyssi (strain GE5 / Orsay).